The following is a 1739-amino-acid chain: MGQTVTTPLSLTLDHWKDVERTAHNQSVEIRKRRWVTLCSAEWPTFNVGWPRDGTFNPDIITQVKIKVFSSGPHGHPDQVPYIVTWEALAADPPPWVKPFVHPKPPPLLLPPSAPSLPPEPPFPTPPQSSLYPALTSPLNTKPRPQVLPDSGGPLIDLLTEDPPPYRDPGPSSSDGNGGSGEVAPTEGAPDSSPMVSRLRGRREPPVADSTTSQAFPLRQGGNGQFQYWPFSSSDLYNWKNNNPSFSEDPAKLTALIESVLLTHQPTWDDCQQLLGTLLTGEEKQRVLLEARKAVRGEDGRPTQLPNDINDAFPLERPDWDYNTQRGRNHLVHYRQLLLAGLQNAGRSPTNLAKVKGITQGPNESPSAFLERLKEAYRRYTPYDPEDPGQETNVAMSFIWQSAPDIGRKLERLEDLKSKTLGDLVREAEKIFNKRETPEEREERIRRETEEKEERRRAEDEQREKERDRRRHREMSKLLATVISGQRQDRQGGERRRPQLDHDQCAYCKEKGHWARDCPKKPRGPRGPRPQASLLTLDDQGGQGQEPPPEPRITLKVGGQPVTFLVDTGAQHSVLTQNPGPLSDKSAWVQGATGGKRYRWTTDRRVHLATGKVTHSFLHVPDCPYPLLGRHLLTKLKAQIHFEGSGAQVVGPMGQPLQVLTLNIEDEYRLHETSKGPDVPLGSTWLSDFPQAWAETGGMGLAFRQAPLIISLKATSTPVSIKQYPMSQEARLGIKPHIQRLLDQGILVPCQSPWNTPLLPVKKPGTNDYRPVQDLREVNKRVEDIHPTVPNPYNLLSGLPPSHQWYTVLDLKDAFFCLRLHPTSQSLFAFEWKDPEMGISGQLTWTRLPQGFKNSPTLFDEALHRDLADFRIQHPDLILLQYVDDLLLAATSELDCQQGTRALLQTLGDLGYRASAKKAQICQKQVKYLGYLLKEGQRWLTEARKETVMGQPTPKTPRQLREFLGTAGLCRLWIPGFAEMAAPLYPLTKTGTLFKWGPDQQKAYQEIKQALLTAPALGLPDLTKPFELFVDEKQGYAKGVLTQKLGPWRRPVAYLSKKLDPVAAGWPPCLRMVAAIAVLTKDVGKLTMGQPLVILAPHAVEALVKQPPDRWLSNARMTHYQALLLDTDRVQFGPIVALNPATLLPLPEEGLQHDCLDILAEAHGTRPDLTDQPLPDADHTWYTDGSSFLQEGQRRAGAAVTTETEVIWAKALPAGTSAQRAELIALTQALKMAAGKKLNVYTDSRYAFATAHIHGEIYRRRGLLTSEGKEIKNKDEILALLKALFLPKRLSIIHCPGHQKGNHAEARGNRMADQAAREVATRETPETSTLLIENSAPYTREHFHYTVTDIKDLTKLGATYDDAKKCWVYQGKPVMPDQFTFELLDFLHQLTHLSFSKTKALLERSYSPSYMLNRDRTLKDITETCKACAQVNASKSAVKQGTRVRGHRPGTHWEIDFTEVKPGLYGYKYLLVFVDTFSGWVEAFPTKKETAKVVTKKLLEEIFPRFGMPQVLGTDNGPAFVSKVSQTVADLLGVDWKLHCAYRPQSSGQVERMNRTIKETLTKLTLATGSRDWVLLLPLALYRARNTPGPHGLTPYEILYGAPPPLVNFPDPDMAKVTHNPSLQAHLQALYLVQHEVWRPLAAAYQEQLDRPVVPHPFRVGDTVWVRRHQTKNLEPRWKGPYTVLLTTPTALKVDGIAAWIHAAHVKAADTRIEPPAESTWRVQRSQNPLKIRLTRGTS.

Gly2 carries N-myristoyl glycine; by host lipidation. Residues 111 to 127 (PPSAPSLPPEPPFPTPP) show a composition bias toward pro residues. Residues 111–222 (PPSAPSLPPE…SQAFPLRQGG (112 aa)) are disordered. The PTAP/PSAP motif signature appears at 112 to 115 (PSAP). Residues 131 to 135 (LYPAL) carry the LYPX(n)L motif motif. The short motif at 163-166 (PPPY) is the PPXY motif element. Residue Ser193 is modified to Phosphoserine; by host. Positions 346–394 (GRSPTNLAKVKGITQGPNESPSAFLERLKEAYRRYTPYDPEDPGQETNV) are interaction with host PIAS4. The segment at 431–436 (IFNKRE) is interaction with host UBE2I. Basic and acidic residues-rich tracts occupy residues 435 to 467 (RETPEEREERIRRETEEKEERRRAEDEQREKER) and 487 to 500 (RQDRQGGERRRPQL). 2 disordered regions span residues 435-500 (RETP…RPQL) and 514-553 (WARDCPKKPRGPRGPRPQASLLTLDDQGGQGQEPPPEPRI). Residues 439–479 (EEREERIRRETEEKEERRRAEDEQREKERDRRRHREMSKLL) adopt a coiled-coil conformation. The segment at 503–520 (DQCAYCKEKGHWARDCPK) adopts a CCHC-type zinc-finger fold. The Peptidase A2 domain maps to 562–632 (VTFLVDTGAQ…CPYPLLGRHL (71 aa)). Asp567 serves as the catalytic Protease; shared with dimeric partner. The Reverse transcriptase domain occupies 742–933 (LDQGILVPCQ…KQVKYLGYLL (192 aa)). Mg(2+) is bound by residues Asp810, Asp884, Asp885, Asp1184, Glu1222, Asp1243, and Asp1313. The RNase H type-1 domain occupies 1175 to 1321 (PDADHTWYTD…ADQAAREVAT (147 aa)). An HHCC-type zinc finger spans residues 1388–1428 (HQLTHLSFSKTKALLERSYSPSYMLNRDRTLKDITETCKAC). An Integrase catalytic domain is found at 1445–1603 (RGHRPGTHWE…TPYEILYGAP (159 aa)). Mg(2+)-binding residues include Asp1456 and Asp1515.

Belongs to the retroviral Pol polyprotein family. Homohexamer; further associates as homomultimer. The virus core is composed of a lattice formed from hexagonal rings, each containing six capsid monomers. As to quaternary structure, interacts (via PPXY motif) with host NEDD4. Interacts (via PSAP motif) with host TSG101. Interacts (via LYPX(n)L motif) with host PDCD6IP. In terms of assembly, the reverse transcriptase is a monomer (Potential). Interacts (via RNase domains) with host release factor ETF1; this interaction is essential for translational readthrough of amber codon between viral gag and pol genes, as well as for viral replication. Homodimer. Mg(2+) is required as a cofactor. Ubiquitinated by ITCH. Gag can recruit the ubiquitin ligase Itch in an L domain-independent manner to facilitate virus release via a mechanism that involves Gag ubiquitination. In terms of processing, specific enzymatic cleavages by the viral protease yield mature proteins. The protease is released by autocatalytic cleavage. The polyprotein is cleaved during and after budding, this process is termed maturation. Post-translationally, sumoylated; which is required for virus replication. Phosphorylated on serine residues.

Its subcellular location is the virion. It is found in the host cell membrane. The protein resides in the host late endosome membrane. It localises to the host endosome. The protein localises to the host multivesicular body. Its subcellular location is the host cytoplasm. The catalysed reaction is DNA(n) + a 2'-deoxyribonucleoside 5'-triphosphate = DNA(n+1) + diphosphate. The enzyme catalyses Endonucleolytic cleavage to 5'-phosphomonoester.. With respect to regulation, most efficiently inhibited by Amprenavir, which is able to block Gag-Pol processing in infected cells. Plays a role in budding and is processed by the viral protease during virion maturation outside the cell. During budding, it recruits, in a PPXY-dependent or independent manner, Nedd4-like ubiquitin ligases that conjugate ubiquitin molecules to Gag-Pol, or to Gag-Pol binding host factors. Interaction with HECT ubiquitin ligases probably links the viral protein to the host ESCRT pathway and facilitates release. Functionally, targets Gag and gag-pol polyproteins to the plasma membrane via a multipartite membrane binding signal, that includes its myristoylated N-terminus. Also mediates nuclear localization of the pre-integration complex. Its function is as follows. Constituent of the pre-integration complex (PIC) which tethers the latter to mitotic chromosomes. This allows the integration of the viral genome into the host DNA. In terms of biological role, forms the spherical core of the virion that encapsulates the genomic RNA-nucleocapsid complex. Involved in the packaging and encapsidation of two copies of the genome. Binds with high affinity to conserved UCUG elements within the packaging signal, located near the 5'-end of the genome. This binding is dependent on genome dimerization. Acts as a nucleic acid chaperone which is involved in rearrangement of nucleic acid secondary structures during gRNA retrotranscription. Functionally, the aspartyl protease mediates proteolytic cleavages of Gag and Gag-Pol polyproteins during or shortly after the release of the virion from the plasma membrane. Cleavages take place as an ordered, step-wise cascade to yield mature proteins. This process is called maturation. Displays maximal activity during the budding process just prior to particle release from the cell (Potential). Cleaves the translation initiation factor eIF4G leading to the inhibition of host cap-dependent translation. Its function is as follows. RT is a multifunctional enzyme that converts the viral dimeric RNA genome into dsDNA in the cytoplasm, shortly after virus entry into the cell. This enzyme displays a DNA polymerase activity that can copy either DNA or RNA templates, and a ribonuclease H (RNase H) activity that cleaves the RNA strand of RNA-DNA heteroduplexes in a partially processive 3' to 5' endonucleasic mode. Conversion of viral genomic RNA into dsDNA requires many steps. A tRNA binds to the primer-binding site (PBS) situated at the 5' end of the viral RNA. RT uses the 3' end of the tRNA primer to perform a short round of RNA-dependent minus-strand DNA synthesis. The reading proceeds through the U5 region and ends after the repeated (R) region which is present at both ends of viral RNA. The portion of the RNA-DNA heteroduplex is digested by the RNase H, resulting in a ssDNA product attached to the tRNA primer. This ssDNA/tRNA hybridizes with the identical R region situated at the 3' end of viral RNA. This template exchange, known as minus-strand DNA strong stop transfer, can be either intra- or intermolecular. RT uses the 3' end of this newly synthesized short ssDNA to perform the RNA-dependent minus-strand DNA synthesis of the whole template. RNase H digests the RNA template except for a polypurine tract (PPT) situated at the 5' end of the genome. It is not clear if both polymerase and RNase H activities are simultaneous. RNase H probably can proceed both in a polymerase-dependent (RNA cut into small fragments by the same RT performing DNA synthesis) and a polymerase-independent mode (cleavage of remaining RNA fragments by free RTs). Secondly, RT performs DNA-directed plus-strand DNA synthesis using the PPT that has not been removed by RNase H as primers. PPT and tRNA primers are then removed by RNase H. The 3' and 5' ssDNA PBS regions hybridize to form a circular dsDNA intermediate. Strand displacement synthesis by RT to the PBS and PPT ends produces a blunt ended, linear dsDNA copy of the viral genome that includes long terminal repeats (LTRs) at both ends. In terms of biological role, catalyzes viral DNA integration into the host chromosome, by performing a series of DNA cutting and joining reactions. This enzyme activity takes place after virion entry into a cell and reverse transcription of the RNA genome in dsDNA. The first step in the integration process is 3' processing. This step requires a complex comprising the viral genome, matrix protein and integrase. This complex is called the pre-integration complex (PIC). The integrase protein removes 2 nucleotides from each 3' end of the viral DNA, leaving recessed CA OH's at the 3' ends. In the second step that requires cell division, the PIC enters cell nucleus. In the third step, termed strand transfer, the integrase protein joins the previously processed 3' ends to the 5' ends of strands of target cellular DNA at the site of integration. The last step is viral DNA integration into host chromosome. The chain is Gag-Pol polyprotein (pol) from Mus musculus (Mouse).